The chain runs to 340 residues: NADPH dehydrogenase (340 aa).

23–26 is an FMN binding site; the sequence is SPMC. Substrate is bound at residue tyrosine 28. Positions 60 and 102 each coordinate FMN. 164-167 is a binding site for substrate; it reads HAAH. FMN is bound by residues arginine 215 and 307–308; that span reads GR.

It belongs to the NADH:flavin oxidoreductase/NADH oxidase family. NamA subfamily. Homotetramer. It depends on FMN as a cofactor.

The enzyme catalyses A + NADPH + H(+) = AH2 + NADP(+). Functionally, catalyzes the reduction of the double bond of an array of alpha,beta-unsaturated aldehydes and ketones. It also reduces the nitro group of nitroester and nitroaromatic compounds. It could have a role in detoxification processes. This chain is NADPH dehydrogenase, found in Geobacillus thermodenitrificans (strain NG80-2).